We begin with the raw amino-acid sequence, 616 residues long: Dihydroxy-acid dehydratase (616 aa).

Residue aspartate 81 participates in Mg(2+) binding. Cysteine 122 contributes to the [2Fe-2S] cluster binding site. Aspartate 123 and lysine 124 together coordinate Mg(2+). Lysine 124 bears the N6-carboxylysine mark. Cysteine 195 is a binding site for [2Fe-2S] cluster. Glutamate 491 is a binding site for Mg(2+). Catalysis depends on serine 517, which acts as the Proton acceptor.

It belongs to the IlvD/Edd family. Homodimer. It depends on [2Fe-2S] cluster as a cofactor. Requires Mg(2+) as cofactor.

The catalysed reaction is (2R)-2,3-dihydroxy-3-methylbutanoate = 3-methyl-2-oxobutanoate + H2O. It carries out the reaction (2R,3R)-2,3-dihydroxy-3-methylpentanoate = (S)-3-methyl-2-oxopentanoate + H2O. It participates in amino-acid biosynthesis; L-isoleucine biosynthesis; L-isoleucine from 2-oxobutanoate: step 3/4. The protein operates within amino-acid biosynthesis; L-valine biosynthesis; L-valine from pyruvate: step 3/4. Functions in the biosynthesis of branched-chain amino acids. Catalyzes the dehydration of (2R,3R)-2,3-dihydroxy-3-methylpentanoate (2,3-dihydroxy-3-methylvalerate) into 2-oxo-3-methylpentanoate (2-oxo-3-methylvalerate) and of (2R)-2,3-dihydroxy-3-methylbutanoate (2,3-dihydroxyisovalerate) into 2-oxo-3-methylbutanoate (2-oxoisovalerate), the penultimate precursor to L-isoleucine and L-valine, respectively. The protein is Dihydroxy-acid dehydratase of Pectobacterium atrosepticum (strain SCRI 1043 / ATCC BAA-672) (Erwinia carotovora subsp. atroseptica).